Reading from the N-terminus, the 115-residue chain is Large ribosomal subunit protein P1 (115 aa).

A compositionally biased stretch (low complexity) spans 56–73 (QAAAAPVPASGGAAAPAE). Positions 56–115 (QAAAAPVPASGGAAAPAEGDADEADEADEEAEEEAADDGGDDDDDEDDEASGEGLGELFG) are disordered. Acidic residues predominate over residues 74 to 106 (GDADEADEADEEAEEEAADDGGDDDDDEDDEAS).

This sequence belongs to the eukaryotic ribosomal protein P1/P2 family. In terms of assembly, part of the 50S ribosomal subunit. Homodimer, it forms part of the ribosomal stalk which helps the ribosome interact with GTP-bound translation factors. Forms a heptameric uL10/P0(P1)2(P1)2(P1)2 complex, where uL10/P0 forms an elongated spine to which the P1 dimers bind in a sequential fashion.

In terms of biological role, forms part of the ribosomal stalk, playing a central role in the interaction of the ribosome with GTP-bound translation factors. The polypeptide is Large ribosomal subunit protein P1 (Haloarcula marismortui (strain ATCC 43049 / DSM 3752 / JCM 8966 / VKM B-1809) (Halobacterium marismortui)).